The primary structure comprises 452 residues: Bifunctional protein GlmU (452 aa).

A pyrophosphorylase region spans residues 1–226 (MSLSVVILAA…ATEVEGVNTR (226 aa)). UDP-N-acetyl-alpha-D-glucosamine is bound by residues 8-11 (LAAG), K22, Q73, 78-79 (GT), 100-102 (YGD), G137, E151, N166, and N224. Residue D102 coordinates Mg(2+). Residue N224 participates in Mg(2+) binding. Residues 227-247 (LQLANLERAYQLKKATELLLS) are linker. An N-acetyltransferase region spans residues 248–452 (GVMLRDPNRF…INNWKRPTKK (205 aa)). Residues R330 and K348 each contribute to the UDP-N-acetyl-alpha-D-glucosamine site. H360 (proton acceptor) is an active-site residue. UDP-N-acetyl-alpha-D-glucosamine is bound by residues Y363 and N374. Residues A377, 383-384 (NY), S402, A420, and R437 contribute to the acetyl-CoA site.

It in the N-terminal section; belongs to the N-acetylglucosamine-1-phosphate uridyltransferase family. This sequence in the C-terminal section; belongs to the transferase hexapeptide repeat family. Homotrimer. Requires Mg(2+) as cofactor.

It localises to the cytoplasm. It catalyses the reaction alpha-D-glucosamine 1-phosphate + acetyl-CoA = N-acetyl-alpha-D-glucosamine 1-phosphate + CoA + H(+). The enzyme catalyses N-acetyl-alpha-D-glucosamine 1-phosphate + UTP + H(+) = UDP-N-acetyl-alpha-D-glucosamine + diphosphate. It participates in nucleotide-sugar biosynthesis; UDP-N-acetyl-alpha-D-glucosamine biosynthesis; N-acetyl-alpha-D-glucosamine 1-phosphate from alpha-D-glucosamine 6-phosphate (route II): step 2/2. It functions in the pathway nucleotide-sugar biosynthesis; UDP-N-acetyl-alpha-D-glucosamine biosynthesis; UDP-N-acetyl-alpha-D-glucosamine from N-acetyl-alpha-D-glucosamine 1-phosphate: step 1/1. The protein operates within bacterial outer membrane biogenesis; LPS lipid A biosynthesis. Its function is as follows. Catalyzes the last two sequential reactions in the de novo biosynthetic pathway for UDP-N-acetylglucosamine (UDP-GlcNAc). The C-terminal domain catalyzes the transfer of acetyl group from acetyl coenzyme A to glucosamine-1-phosphate (GlcN-1-P) to produce N-acetylglucosamine-1-phosphate (GlcNAc-1-P), which is converted into UDP-GlcNAc by the transfer of uridine 5-monophosphate (from uridine 5-triphosphate), a reaction catalyzed by the N-terminal domain. In Psychromonas ingrahamii (strain DSM 17664 / CCUG 51855 / 37), this protein is Bifunctional protein GlmU.